Consider the following 400-residue polypeptide: Elongation factor Tu (400 aa).

The 200-residue stretch at 10-209 (KPHVNIGTIG…VVDKYIPTPQ (200 aa)) folds into the tr-type G domain. Positions 19 to 26 (GHVDHGKT) are G1. Residue 19-26 (GHVDHGKT) participates in GTP binding. Thr-26 serves as a coordination point for Mg(2+). The tract at residues 60-64 (GITIN) is G2. A G3 region spans residues 81-84 (DCPG). Residues 81–85 (DCPGH) and 136–139 (NKVD) each bind GTP. Positions 136-139 (NKVD) are G4. The interval 174-176 (SAL) is G5.

The protein belongs to the TRAFAC class translation factor GTPase superfamily. Classic translation factor GTPase family. EF-Tu/EF-1A subfamily. Monomer.

The protein resides in the cytoplasm. The catalysed reaction is GTP + H2O = GDP + phosphate + H(+). In terms of biological role, GTP hydrolase that promotes the GTP-dependent binding of aminoacyl-tRNA to the A-site of ribosomes during protein biosynthesis. This is Elongation factor Tu from Caldicellulosiruptor saccharolyticus (strain ATCC 43494 / DSM 8903 / Tp8T 6331).